Reading from the N-terminus, the 215-residue chain is Thymidylate kinase (215 aa).

7-14 contacts ATP; that stretch reads GLDGSGKT.

Belongs to the thymidylate kinase family.

The catalysed reaction is dTMP + ATP = dTDP + ADP. In terms of biological role, phosphorylation of dTMP to form dTDP in both de novo and salvage pathways of dTTP synthesis. The chain is Thymidylate kinase from Mycoplasmopsis agalactiae (strain NCTC 10123 / CIP 59.7 / PG2) (Mycoplasma agalactiae).